The following is a 483-amino-acid chain: Centrosomal protein cep57l1 (483 aa).

Residues 94–228 (EHKKVLESEK…AQVQTSLEVN (135 aa)) adopt a coiled-coil conformation. Disordered regions lie at residues 237–261 (AQNSTQRKVKKKKQSKLKNSVSKEP), 303–325 (PQVSQKNPKTAEHKPSVLPGGSR), and 416–460 (KEQP…SKAS). Positions 243-252 (RKVKKKKQSK) are enriched in basic residues. The stretch at 375 to 418 (EDLERELDYVVKQMEIKSDQIMKLKRHQLNVNKLKKTAKLLKEQ) forms a coiled coil. Over residues 420-435 (RPTSVTKLAADKQNTG) the composition is skewed to polar residues.

Belongs to the translokin family. In terms of assembly, interacts with clip1, mis12, ndc80 and zwint. Interacts with gamma-tubulin.

It localises to the cytoplasm. Its subcellular location is the cytoskeleton. The protein localises to the microtubule organizing center. The protein resides in the centrosome. It is found in the chromosome. It localises to the centromere. Its subcellular location is the kinetochore. The protein localises to the spindle. Functionally, required for spindle microtubule attachment to both kinetochores and centrosomes. Also functions to tether minus-ends of spindle microtubules to centrosomes. May act by forming ring-like structures around microtubules, or by serving as a cross-linker or scaffold at the attachment site. This chain is Centrosomal protein cep57l1 (cep57l1), found in Xenopus tropicalis (Western clawed frog).